The following is a 205-amino-acid chain: Mitotic spindle assembly checkpoint protein MAD2A (205 aa).

Residue alanine 2 is modified to N-acetylalanine. Residues 14–197 form the HORMA domain; the sequence is RGSAEIVAEF…TTIHKVNSMV (184 aa). A phosphoserine mark is found at serine 130, serine 170, serine 185, and serine 195. Positions 195–205 are required for assuming the closed conformation and for interaction with CDC20; that stretch reads SMVAYKTPVND.

Belongs to the MAD2 family. Monomer and homodimer. Heterodimerizes with MAD2L1 in order to form a tetrameric MAD1L1-MAD2L1 core complex. In the closed and open conformation, interacts with MAD1L1. Formation of a heterotetrameric core complex containing two molecules each of MAD1L1 and of MAD2L1 promotes binding of another molecule of MAD2L1 to each MAD2L1, resulting in a heterohexamer. Interacts with MAD2L1BP. Interacts with ADAM17/TACE. Interacts with CDC20. Dimeric MAD2L1 in the closed conformation interacts with CDC20. Monomeric MAD2L1 in the open conformation does not interact with CDC20. CDC20 competes with MAD1L1 for MAD2L1 binding. In the closed conformation, interacts with BUB1B. Interacts with TTK. Interacts with TPR. Binds to UBD (via ubiquitin-like 1 domain) during mitosis. Interacts with isoform 1 and isoform 2 of NEK2. Interacts with HSF1; this interaction occurs in mitosis. In terms of processing, phosphorylated on multiple serine residues. The level of phosphorylation varies during the cell cycle and is highest during mitosis. Phosphorylation abolishes interaction with MAD1L1 and reduces interaction with CDC20. Phosphorylated by NEK2.

It is found in the nucleus. It localises to the chromosome. Its subcellular location is the centromere. The protein localises to the kinetochore. The protein resides in the cytoplasm. It is found in the cytoskeleton. It localises to the spindle pole. Its function is as follows. Component of the spindle-assembly checkpoint that prevents the onset of anaphase until all chromosomes are properly aligned at the metaphase plate. In the closed conformation (C-MAD2) forms a heterotetrameric complex with MAD1L1 at unattached kinetochores during prometaphase, and recruits an open conformation of MAD2L1 (O-MAD2) which then promotes the conversion of O-MAD2 to C-MAD2. Required for the execution of the mitotic checkpoint which monitors the process of kinetochore-spindle attachment and inhibits the activity of the anaphase promoting complex by sequestering CDC20 until all chromosomes are aligned at the metaphase plate. The sequence is that of Mitotic spindle assembly checkpoint protein MAD2A (Mad2l1) from Mus musculus (Mouse).